Consider the following 236-residue polypeptide: Bidirectional sugar transporter SWEET2 (236 aa).

The Extracellular portion of the chain corresponds to 1-15 (MDVFAFNASLSMCKD). Asn-7 carries N-linked (GlcNAc...) asparagine glycosylation. The helical transmembrane segment at 16–36 (VAGIAGNIFAFGLFVSPMPTF) threads the bilayer. One can recognise a MtN3/slv 1 domain in the interval 18-103 (GIAGNIFAFG…ILFIMHTDKK (86 aa)). Residues 37 to 50 (RRIMRNKSTEQFSG) are Cytoplasmic-facing. A helical membrane pass occupies residues 51–71 (LPYIYALLNCLICLWYGTPFI). Residues 72–76 (SHSNA) lie on the Extracellular side of the membrane. A helical transmembrane segment spans residues 77-97 (MLMTVNSVGATFQLCYIILFI). Over 98–108 (MHTDKKNKMKM) the chain is Cytoplasmic. A helical transmembrane segment spans residues 109 to 129 (LGLLFVVFAVVGVIVAGSLQI). Residues 130–137 (PDQLTRWY) lie on the Extracellular side of the membrane. A helical membrane pass occupies residues 138-158 (FVGFLSCGSLVSMFASPLFVI). The MtN3/slv 2 domain occupies 138–221 (FVGFLSCGSL…LALYCYYHRN (84 aa)). Topologically, residues 159 to 170 (NLVIRTKSVEFM) are cytoplasmic. Residues 171 to 191 (PFYLSLSTFLMSASFLLYGLF) traverse the membrane as a helical segment. The Extracellular portion of the chain corresponds to 192-194 (NSD). A helical membrane pass occupies residues 195–215 (AFVYTPNGIGTILGIVQLALY). The Cytoplasmic segment spans residues 216-236 (CYYHRNSIEEETKEPLIVSYV).

This sequence belongs to the SWEET sugar transporter family. As to quaternary structure, forms heterooligomers with SWEET17.

Its subcellular location is the cell membrane. Functionally, mediates both low-affinity uptake and efflux of sugar across the plasma membrane. In Arabidopsis thaliana (Mouse-ear cress), this protein is Bidirectional sugar transporter SWEET2.